Consider the following 590-residue polypeptide: L-erythrulose kinase (590 aa).

Residues 7 to 331 (QPSSFARELT…WRAPADAPAF (325 aa)) enclose the DhaK domain. The active-site Tele-hemiaminal-histidine intermediate is H217. One can recognise a DhaL domain in the interval 366–568 (HCVAAALNAA…LAMILDAVSA (203 aa)). Residues 398-401 (HGIG), 441-442 (TS), G483, R540, and 553-555 (DAG) contribute to the ADP site.

The catalysed reaction is L-erythrulose + ATP = L-erythrulose 1-phosphate + ADP + H(+). The protein operates within carbohydrate metabolism. Its function is as follows. Involved in catabolism of D-apiose. Catalyzes the phosphorylation of L-erythrulose to L-erythrulose 1-phosphate. Can also phosphorylate D-erythrulose and dihydroxyacetone in vitro. The polypeptide is L-erythrulose kinase (Pectobacterium atrosepticum (strain SCRI 1043 / ATCC BAA-672) (Erwinia carotovora subsp. atroseptica)).